Here is a 72-residue protein sequence, read N- to C-terminus: Translation initiation factor IF-1 (72 aa).

In terms of domain architecture, S1-like spans 1-72; the sequence is MAKSDVIEVD…DKGRITYRYK (72 aa).

The protein belongs to the IF-1 family. In terms of assembly, component of the 30S ribosomal translation pre-initiation complex which assembles on the 30S ribosome in the order IF-2 and IF-3, IF-1 and N-formylmethionyl-tRNA(fMet); mRNA recruitment can occur at any time during PIC assembly.

It is found in the cytoplasm. In terms of biological role, one of the essential components for the initiation of protein synthesis. Stabilizes the binding of IF-2 and IF-3 on the 30S subunit to which N-formylmethionyl-tRNA(fMet) subsequently binds. Helps modulate mRNA selection, yielding the 30S pre-initiation complex (PIC). Upon addition of the 50S ribosomal subunit IF-1, IF-2 and IF-3 are released leaving the mature 70S translation initiation complex. In Sulfurimonas denitrificans (strain ATCC 33889 / DSM 1251) (Thiomicrospira denitrificans (strain ATCC 33889 / DSM 1251)), this protein is Translation initiation factor IF-1.